The chain runs to 383 residues: UPF0425 pyridoxal phosphate-dependent protein Msp_0916 (383 aa).

Residue Lys-207 is modified to N6-(pyridoxal phosphate)lysine.

It belongs to the UPF0425 family. It depends on pyridoxal 5'-phosphate as a cofactor.

The sequence is that of UPF0425 pyridoxal phosphate-dependent protein Msp_0916 from Methanosphaera stadtmanae (strain ATCC 43021 / DSM 3091 / JCM 11832 / MCB-3).